A 177-amino-acid polypeptide reads, in one-letter code: Large ribosomal subunit protein uL10 (177 aa).

The protein belongs to the universal ribosomal protein uL10 family. Part of the ribosomal stalk of the 50S ribosomal subunit. The N-terminus interacts with L11 and the large rRNA to form the base of the stalk. The C-terminus forms an elongated spine to which L12 dimers bind in a sequential fashion forming a multimeric L10(L12)X complex.

Functionally, forms part of the ribosomal stalk, playing a central role in the interaction of the ribosome with GTP-bound translation factors. This chain is Large ribosomal subunit protein uL10, found in Xanthomonas axonopodis pv. citri (strain 306).